Consider the following 234-residue polypeptide: Ribosomal RNA small subunit methyltransferase G (234 aa).

Residues Gly85, Phe90, and Arg155 each contribute to the S-adenosyl-L-methionine site.

Belongs to the methyltransferase superfamily. RNA methyltransferase RsmG family.

It is found in the cytoplasm. The catalysed reaction is guanosine(527) in 16S rRNA + S-adenosyl-L-methionine = N(7)-methylguanosine(527) in 16S rRNA + S-adenosyl-L-homocysteine. Its function is as follows. Specifically methylates the N7 position of guanine in position 527 of 16S rRNA. In Rhodopseudomonas palustris (strain BisB18), this protein is Ribosomal RNA small subunit methyltransferase G.